Consider the following 90-residue polypeptide: Barrier-to-autointegration factor-like protein (90 aa).

The protein belongs to the BAF family. Homodimer. Heterodimerizes with BANF1.

The protein localises to the nucleus. Its subcellular location is the cytoplasm. In terms of biological role, may play a role in BANF1 regulation and influence tissue-specific roles of BANF1. The sequence is that of Barrier-to-autointegration factor-like protein (BANF2) from Bos taurus (Bovine).